The primary structure comprises 87 residues: Small ribosomal subunit protein bS20 (87 aa).

This sequence belongs to the bacterial ribosomal protein bS20 family.

Binds directly to 16S ribosomal RNA. This Clostridium beijerinckii (strain ATCC 51743 / NCIMB 8052) (Clostridium acetobutylicum) protein is Small ribosomal subunit protein bS20.